The sequence spans 860 residues: Leucine--tRNA ligase (860 aa).

A 'HIGH' region motif is present at residues 42–52; that stretch reads PYPSGRLHMGH. Positions 619-623 match the 'KMSKS' region motif; that stretch reads KMSKS. K622 serves as a coordination point for ATP.

This sequence belongs to the class-I aminoacyl-tRNA synthetase family.

It localises to the cytoplasm. The catalysed reaction is tRNA(Leu) + L-leucine + ATP = L-leucyl-tRNA(Leu) + AMP + diphosphate. In Edwardsiella ictaluri (strain 93-146), this protein is Leucine--tRNA ligase.